The following is a 214-amino-acid chain: Octanoyltransferase (214 aa).

The BPL/LPL catalytic domain maps to 29–214 (SETLDEIWVL…QHLQKQLIPS (186 aa)). Residues 69–76 (RGGEITYH), 146–148 (ALG), and 159–161 (GLA) each bind substrate. The active-site Acyl-thioester intermediate is Cys-177.

The protein belongs to the LipB family.

The protein localises to the cytoplasm. It catalyses the reaction octanoyl-[ACP] + L-lysyl-[protein] = N(6)-octanoyl-L-lysyl-[protein] + holo-[ACP] + H(+). Its pathway is protein modification; protein lipoylation via endogenous pathway; protein N(6)-(lipoyl)lysine from octanoyl-[acyl-carrier-protein]: step 1/2. Its function is as follows. Catalyzes the transfer of endogenously produced octanoic acid from octanoyl-acyl-carrier-protein onto the lipoyl domains of lipoate-dependent enzymes. Lipoyl-ACP can also act as a substrate although octanoyl-ACP is likely to be the physiological substrate. The chain is Octanoyltransferase from Polynucleobacter necessarius subsp. necessarius (strain STIR1).